Reading from the N-terminus, the 458-residue chain is uncharacterized protein (458 aa).

Transmembrane regions (helical) follow at residues 26–46, 47–67, 95–115, 125–145, 160–180, 208–228, 251–271, 278–298, 342–362, 365–385, 409–429, and 432–452; these read LIAIGGAIGTGLFLGSGKSIH, FAGPSILFAYMITGIICFLIM, AAFITGWTYWFCWISIAMADL, WLPGVPQWVPGLIALIILLIM, FALIKVIAILALIVIGLVMIF, GFILSFQMVVFAFVGIELVGL, VLLFYIGALLVIMSIYPWDII, FVQVFVAVGIVGAASIINFVV, ALFFSAIVILIGVTLNYIMPE, FTLITSISTVCFIYIWGITVI, PFTNYLILAFLAFVLVVLALA, and TRVSLFVTPVWFILLIVIYKV.

This sequence belongs to the amino acid-polyamine-organocation (APC) superfamily.

Its subcellular location is the cell membrane. Functionally, probable amino-acid or metabolite transport protein. This is an uncharacterized protein from Bacillus subtilis (strain 168).